The primary structure comprises 189 residues: Probable DNA-directed RNA polymerase subunit delta (189 aa).

In terms of domain architecture, HTH HARE-type spans 14–81 (LSMIEVAHAI…GENVWALRTW (68 aa)). 2 stretches are compositionally biased toward acidic residues: residues 90-100 (EVDHPEDDGDE) and 118-189 (EGDD…EDEE). Residues 90–189 (EVDHPEDDGD…DDLDDDEDEE (100 aa)) are disordered.

The protein belongs to the RpoE family. RNAP is composed of a core of 2 alpha, a beta and a beta' subunits. The core is associated with a delta subunit and one of several sigma factors.

Its function is as follows. Participates in both the initiation and recycling phases of transcription. In the presence of the delta subunit, RNAP displays an increased specificity of transcription, a decreased affinity for nucleic acids, and an increased efficiency of RNA synthesis because of enhanced recycling. The chain is Probable DNA-directed RNA polymerase subunit delta from Lactobacillus delbrueckii subsp. bulgaricus (strain ATCC 11842 / DSM 20081 / BCRC 10696 / JCM 1002 / NBRC 13953 / NCIMB 11778 / NCTC 12712 / WDCM 00102 / Lb 14).